The chain runs to 129 residues: Cytochrome c oxidase subunit 5B, mitochondrial (129 aa).

Residues 1 to 31 constitute a mitochondrion transit peptide; the sequence is MASRLLRGVGALASQALRARGPNGVSVVRSM. N6-acetyllysine is present on residues K68 and K86. Zn(2+)-binding residues include C91, C93, C113, and C116. Position 121 is an N6-acetyllysine (K121).

It belongs to the cytochrome c oxidase subunit 5B family. In terms of assembly, component of the cytochrome c oxidase (complex IV, CIV), a multisubunit enzyme composed of 14 subunits. The complex is composed of a catalytic core of 3 subunits MT-CO1, MT-CO2 and MT-CO3, encoded in the mitochondrial DNA, and 11 supernumerary subunits COX4I1 (or COX4I2), COX5A, COX5B, COX6A2 (or COX6A1), COX6B1 (or COX6B2), COX6C, COX7A1 (or COX7A2), COX7B, COX7C, COX8B and NDUFA4, which are encoded in the nuclear genome. The complex exists as a monomer or a dimer and forms supercomplexes (SCs) in the inner mitochondrial membrane with NADH-ubiquinone oxidoreductase (complex I, CI) and ubiquinol-cytochrome c oxidoreductase (cytochrome b-c1 complex, complex III, CIII), resulting in different assemblies (supercomplex SCI(1)III(2)IV(1) and megacomplex MCI(2)III(2)IV(2)).

The protein localises to the mitochondrion inner membrane. It functions in the pathway energy metabolism; oxidative phosphorylation. Its function is as follows. Component of the cytochrome c oxidase, the last enzyme in the mitochondrial electron transport chain which drives oxidative phosphorylation. The respiratory chain contains 3 multisubunit complexes succinate dehydrogenase (complex II, CII), ubiquinol-cytochrome c oxidoreductase (cytochrome b-c1 complex, complex III, CIII) and cytochrome c oxidase (complex IV, CIV), that cooperate to transfer electrons derived from NADH and succinate to molecular oxygen, creating an electrochemical gradient over the inner membrane that drives transmembrane transport and the ATP synthase. Cytochrome c oxidase is the component of the respiratory chain that catalyzes the reduction of oxygen to water. Electrons originating from reduced cytochrome c in the intermembrane space (IMS) are transferred via the dinuclear copper A center (CU(A)) of subunit 2 and heme A of subunit 1 to the active site in subunit 1, a binuclear center (BNC) formed by heme A3 and copper B (CU(B)). The BNC reduces molecular oxygen to 2 water molecules using 4 electrons from cytochrome c in the IMS and 4 protons from the mitochondrial matrix. In Bos taurus (Bovine), this protein is Cytochrome c oxidase subunit 5B, mitochondrial (COX5B).